The sequence spans 696 residues: DNA ligase (696 aa).

Residues 55–59 (DYEFD), 105–106 (SL), and Glu-137 contribute to the NAD(+) site. The active-site N6-AMP-lysine intermediate is the Lys-139. The NAD(+) site is built by Arg-160, Glu-194, Lys-310, and Lys-334. Positions 428, 431, 446, and 451 each coordinate Zn(2+). The 82-residue stretch at 615–696 (NVNPNFVGKN…EFIELKDKFD (82 aa)) folds into the BRCT domain.

The protein belongs to the NAD-dependent DNA ligase family. LigA subfamily. Mg(2+) is required as a cofactor. Requires Mn(2+) as cofactor.

The enzyme catalyses NAD(+) + (deoxyribonucleotide)n-3'-hydroxyl + 5'-phospho-(deoxyribonucleotide)m = (deoxyribonucleotide)n+m + AMP + beta-nicotinamide D-nucleotide.. DNA ligase that catalyzes the formation of phosphodiester linkages between 5'-phosphoryl and 3'-hydroxyl groups in double-stranded DNA using NAD as a coenzyme and as the energy source for the reaction. It is essential for DNA replication and repair of damaged DNA. This Fusobacterium nucleatum subsp. nucleatum (strain ATCC 25586 / DSM 15643 / BCRC 10681 / CIP 101130 / JCM 8532 / KCTC 2640 / LMG 13131 / VPI 4355) protein is DNA ligase.